Here is a 246-residue protein sequence, read N- to C-terminus: Exosome complex component Rrp41 (246 aa).

This sequence belongs to the RNase PH family. Rrp41 subfamily. Component of the archaeal exosome complex. Forms a hexameric ring-like arrangement composed of 3 Rrp41-Rrp42 heterodimers. The hexameric ring associates with a trimer of Rrp4 and/or Csl4 subunits.

Its subcellular location is the cytoplasm. In terms of biological role, catalytic component of the exosome, which is a complex involved in RNA degradation. Has 3'-&gt;5' exoribonuclease activity. Can also synthesize heteromeric RNA-tails. The sequence is that of Exosome complex component Rrp41 from Pyrobaculum neutrophilum (strain DSM 2338 / JCM 9278 / NBRC 100436 / V24Sta) (Thermoproteus neutrophilus).